The chain runs to 136 residues: Nodulation protein K (136 aa).

The polypeptide is Nodulation protein K (nodK) (Bradyrhizobium sp. (strain ANU 289)).